Consider the following 166-residue polypeptide: ATP synthase subunit b (166 aa).

Residues 10–30 traverse the membrane as a helical segment; sequence LLFWMIVSFGIVFVILSKYGF.

It belongs to the ATPase B chain family. As to quaternary structure, F-type ATPases have 2 components, F(1) - the catalytic core - and F(0) - the membrane proton channel. F(1) has five subunits: alpha(3), beta(3), gamma(1), delta(1), epsilon(1). F(0) has three main subunits: a(1), b(2) and c(10-14). The alpha and beta chains form an alternating ring which encloses part of the gamma chain. F(1) is attached to F(0) by a central stalk formed by the gamma and epsilon chains, while a peripheral stalk is formed by the delta and b chains.

The protein localises to the cell inner membrane. F(1)F(0) ATP synthase produces ATP from ADP in the presence of a proton or sodium gradient. F-type ATPases consist of two structural domains, F(1) containing the extramembraneous catalytic core and F(0) containing the membrane proton channel, linked together by a central stalk and a peripheral stalk. During catalysis, ATP synthesis in the catalytic domain of F(1) is coupled via a rotary mechanism of the central stalk subunits to proton translocation. Its function is as follows. Component of the F(0) channel, it forms part of the peripheral stalk, linking F(1) to F(0). The sequence is that of ATP synthase subunit b from Parabacteroides distasonis (strain ATCC 8503 / DSM 20701 / CIP 104284 / JCM 5825 / NCTC 11152).